Here is a 641-residue protein sequence, read N- to C-terminus: Putative ABC transporter ATP-binding protein MA_0870 (641 aa).

Residues 10-250 (IEIKDLWYTY…IEVFHRLGLR (241 aa)) form the ABC transporter 1 domain. 44–51 (GPTGCGKS) provides a ligand contact to ATP. The disordered stretch occupies residues 286-332 (VKTPRNFSNPEEETGRRTDPAERNEFVNTGSGNIKYGDNRSENKGSE). Composition is skewed to basic and acidic residues over residues 298–310 (ETGR…ERNE) and 322–332 (GDNRSENKGSE). An ABC transporter 2 domain is found at 338-566 (ISIRDLWSGY…IEILKQASLT (229 aa)). 371–378 (GTNGSGKS) is a binding site for ATP.

This sequence belongs to the ABC transporter superfamily.

The protein resides in the cell membrane. Probably part of an ABC transporter complex. Responsible for energy coupling to the transport system. This chain is Putative ABC transporter ATP-binding protein MA_0870, found in Methanosarcina acetivorans (strain ATCC 35395 / DSM 2834 / JCM 12185 / C2A).